A 1259-amino-acid chain; its full sequence is Cingulin (1259 aa).

The head stretch occupies residues methionine 9–proline 324. The ZIM signature appears at glutamine 41–glycine 55. The span at serine 69–glutamate 79 shows a compositional bias: basic and acidic residues. Disordered stretches follow at residues serine 69 to lysine 151, valine 169 to leucine 232, phenylalanine 317 to leucine 338, lysine 941 to arginine 969, and arginine 1192 to cysteine 1259. The span at arginine 80–glycine 100 shows a compositional bias: polar residues. Residues serine 117–serine 127 are compositionally biased toward low complexity. Polar residues predominate over residues asparagine 128–serine 145. The segment covering alanine 179–glutamate 204 has biased composition (basic and acidic residues). The span at valine 220–arginine 229 shows a compositional bias: polar residues. The stretch at glycine 325–lysine 1218 forms a coiled coil. Residues glutamate 326–leucine 338 are compositionally biased toward basic and acidic residues. Positions isoleucine 1220–cysteine 1259 are tail. Polar residues predominate over residues aspartate 1241–cysteine 1259.

This sequence belongs to the cingulin family. As to quaternary structure, parallel homodimer. Interacts with TJP1/ZO1 and TJP2/ZO2.

Its subcellular location is the cell junction. It is found in the tight junction. Probably plays a role in the formation and regulation of the tight junction (TJ) paracellular permeability barrier, possibly by linking ZO proteins to the actomyosin cytoskeleton. This Xenopus tropicalis (Western clawed frog) protein is Cingulin.